The primary structure comprises 284 residues: Bifunctional protein FolD (284 aa).

NADP(+) contacts are provided by residues 166-168 (GAS) and I232.

This sequence belongs to the tetrahydrofolate dehydrogenase/cyclohydrolase family. Homodimer.

The enzyme catalyses (6R)-5,10-methylene-5,6,7,8-tetrahydrofolate + NADP(+) = (6R)-5,10-methenyltetrahydrofolate + NADPH. It catalyses the reaction (6R)-5,10-methenyltetrahydrofolate + H2O = (6R)-10-formyltetrahydrofolate + H(+). The protein operates within one-carbon metabolism; tetrahydrofolate interconversion. Functionally, catalyzes the oxidation of 5,10-methylenetetrahydrofolate to 5,10-methenyltetrahydrofolate and then the hydrolysis of 5,10-methenyltetrahydrofolate to 10-formyltetrahydrofolate. This chain is Bifunctional protein FolD, found in Shewanella frigidimarina (strain NCIMB 400).